A 372-amino-acid chain; its full sequence is MEKRDYYEVLGLTKSATKDEIKKAYRKLSKQYHPDLNKEPGADEKFKEIAEAYEVLSDDQKKARYDQFGHEDPNAGFGGGFGGGGFGGFEDIFSSFFGGGGRRQDPNAPRKGDDLQYRMNIKFEEAIFGKETEIEIPKDETCETCHGSGAKPGTQPETCSTCNGAGQINQAVDTPFGRMMNRRSCTTCHGTGKIIKEKCSTCRGEGKVQKRKKIKVSIPAGVDDGQQIRVSGQGEPGINGGPAGDLYIMFRVQGHNDFERDGDDIYFELKLTFPQAALGDEIEVPTVHGKVKLRIPAGTQSGAQFRLKDKGVKNVHGYGMGNQYVTVKVMTPEKLTEKQKQLLREFAEISGDIPEEQGSSLFDKIKKKFQGE.

The J domain occupies 5 to 69 (DYYEVLGLTK…QKKARYDQFG (65 aa)). The CR-type zinc-finger motif lies at 129-211 (GKETEIEIPK…CRGEGKVQKR (83 aa)). Residues C142, C145, C159, C162, C185, C188, C199, and C202 each contribute to the Zn(2+) site. CXXCXGXG motif repeat units lie at residues 142–149 (CETCHGSG), 159–166 (CSTCNGAG), 185–192 (CTTCHGTG), and 199–206 (CSTCRGEG).

This sequence belongs to the DnaJ family. Homodimer. Zn(2+) is required as a cofactor.

The protein localises to the cytoplasm. Its function is as follows. Participates actively in the response to hyperosmotic and heat shock by preventing the aggregation of stress-denatured proteins and by disaggregating proteins, also in an autonomous, DnaK-independent fashion. Unfolded proteins bind initially to DnaJ; upon interaction with the DnaJ-bound protein, DnaK hydrolyzes its bound ATP, resulting in the formation of a stable complex. GrpE releases ADP from DnaK; ATP binding to DnaK triggers the release of the substrate protein, thus completing the reaction cycle. Several rounds of ATP-dependent interactions between DnaJ, DnaK and GrpE are required for fully efficient folding. Also involved, together with DnaK and GrpE, in the DNA replication of plasmids through activation of initiation proteins. In Lysinibacillus sphaericus (strain C3-41), this protein is Chaperone protein DnaJ.